An 88-amino-acid chain; its full sequence is Large ribosomal subunit protein bL27 (88 aa).

The tract at residues 1-24 (MAHKKAGGSSRNGRDSEGRRLGVK) is disordered.

This sequence belongs to the bacterial ribosomal protein bL27 family.

The sequence is that of Large ribosomal subunit protein bL27 from Methylobacterium radiotolerans (strain ATCC 27329 / DSM 1819 / JCM 2831 / NBRC 15690 / NCIMB 10815 / 0-1).